Consider the following 354-residue polypeptide: Guanine nucleotide-binding protein G(i) subunit alpha-1 (354 aa).

A lipid anchor (N-myristoyl glycine) is attached at Gly2. Cys3 carries the S-palmitoyl cysteine lipid modification. Positions 32-354 (REVKLLLLGA…KNNLKDCGLF (323 aa)) constitute a G-alpha domain. The segment at 35-48 (KLLLLGAGESGKST) is G1 motif. GTP contacts are provided by residues 43–48 (ESGKST), 150–151 (DS), and 175–178 (LRTR). Position 47 (Ser47) interacts with Mg(2+). Residues 173–181 (DVLRTRVKT) form a G2 motif region. Thr181 contributes to the Mg(2+) binding site. Positions 196 to 205 (FKMFDVGGQR) are G3 motif. Residues 200-204 (DVGGQ), 269-272 (NKKD), and Ala326 each bind GTP. A G4 motif region spans residues 265 to 272 (ILFLNKKD). A G5 motif region spans residues 324–329 (TCATDT).

It belongs to the G-alpha family. G(i/o/t/z) subfamily. Heterotrimeric G proteins are composed of 3 units; alpha, beta and gamma. The alpha chain contains the guanine nucleotide binding site. Part of a spindle orientation complex. Identified in complex with the beta subunit GNB1 and the gamma subunit GNG1. Identified in complex with the beta subunit GNB1 and the gamma subunit GNG2. GTP binding causes dissociation of the heterotrimer, liberating the individual subunits so that they can interact with downstream effector proteins. In terms of processing, myristoylation at Gly-2 is required for membrane anchoring before palmitoylation. Post-translationally, palmitoylation at Cys-3 varies with membrane lipid composition.

It localises to the nucleus. It is found in the cytoplasm. The protein localises to the cell membrane. Its subcellular location is the cytoskeleton. The protein resides in the microtubule organizing center. It localises to the centrosome. It is found in the cell cortex. The protein localises to the membrane. The enzyme catalyses GTP + H2O = GDP + phosphate + H(+). Guanine nucleotide-binding proteins (G proteins) function as transducers downstream of G protein-coupled receptors (GPCRs) in numerous signaling cascades. The alpha chain contains the guanine nucleotide binding site and alternates between an active, GTP-bound state and an inactive, GDP-bound state. Signaling by an activated GPCR promotes GDP release and GTP binding. The alpha subunit has a low GTPase activity that converts bound GTP to GDP, thereby terminating the signal. Both GDP release and GTP hydrolysis are modulated by numerous regulatory proteins. Signaling is mediated via effector proteins, such as adenylate cyclase. Inhibits adenylate cyclase activity of ADCY1, ADCY5 and ADCY6, leading to decreased intracellular cAMP levels. Required for cortical dynein-dynactin complex recruitment during metaphase. The chain is Guanine nucleotide-binding protein G(i) subunit alpha-1 (GNAI1) from Gallus gallus (Chicken).